Consider the following 169-residue polypeptide: Translationally-controlled tumor protein homolog (169 aa).

A TCTP domain is found at 1-169 (MIIYKDIVSG…FKDGLEEEKF (169 aa)).

Belongs to the TCTP family.

It localises to the cytoplasm. Involved in calcium binding and microtubule stabilization. This chain is Translationally-controlled tumor protein homolog, found in Branchiostoma belcheri (Amphioxus).